The primary structure comprises 119 residues: Holo-[acyl-carrier-protein] synthase (119 aa).

Residues Asp-8 and Glu-58 each coordinate Mg(2+).

It belongs to the P-Pant transferase superfamily. AcpS family. Mg(2+) serves as cofactor.

Its subcellular location is the cytoplasm. It carries out the reaction apo-[ACP] + CoA = holo-[ACP] + adenosine 3',5'-bisphosphate + H(+). In terms of biological role, transfers the 4'-phosphopantetheine moiety from coenzyme A to a Ser of acyl-carrier-protein. This is Holo-[acyl-carrier-protein] synthase from Bacillus thuringiensis subsp. konkukian (strain 97-27).